The chain runs to 325 residues: Aldo-keto reductase family 1 member A1 (325 aa).

T2 carries the post-translational modification N-acetylthreonine. S4 is subject to Phosphoserine. NADP(+) is bound by residues G11–G20, T21, and W22. K23 is a glycosylation site (N-linked (Glc) (glycation) lysine). S38 carries the post-translational modification Phosphoserine. D45 contributes to the NADP(+) binding site. Residue Y50 is the Proton donor of the active site. Residues K68 and K85 are each glycosylated (N-linked (Glc) (glycation) lysine). K127 carries the N6-acetyllysine; alternate modification. K127 carries the post-translational modification N6-succinyllysine; alternate. The N-linked (Glc) (glycation) lysine glycan is linked to K141. K145 is modified (N6-succinyllysine). A glycan (N-linked (Glc) (glycation) lysine) is linked at K153. NADP(+) is bound by residues S162, N163, S211, L213, S215, S216, K263, S264, I265, T266, R269, Q272, and N273. A Phosphoserine modification is found at S211.

Belongs to the aldo/keto reductase family. In terms of assembly, monomer. In terms of tissue distribution, widely expressed.

It localises to the cytoplasm. The protein localises to the cytosol. The protein resides in the apical cell membrane. The enzyme catalyses a primary alcohol + NADP(+) = an aldehyde + NADPH + H(+). It carries out the reaction L-gulonate + NADP(+) = aldehydo-D-glucuronate + NADPH + H(+). The catalysed reaction is L-gulono-1,4-lactone + NADP(+) = D-glucurono-3,6-lactone + NADPH + H(+). It catalyses the reaction allyl alcohol + NADP(+) = acrolein + NADPH + H(+). The enzyme catalyses glycerol + NADP(+) = D-glyceraldehyde + NADPH + H(+). It carries out the reaction glycerol + NADP(+) = L-glyceraldehyde + NADPH + H(+). The catalysed reaction is hydroxyacetone + NADP(+) = methylglyoxal + NADPH + H(+). It catalyses the reaction 3-deoxyfructose + NADP(+) = 3-deoxyglucosone + NADPH + H(+). The enzyme catalyses (R)-mevalonate + NADP(+) = (R)-mevaldate + NADPH + H(+). It carries out the reaction pyridine 3-methanol + NADP(+) = pyridine-3-carbaldehyde + NADPH + H(+). The catalysed reaction is S-nitroso-CoA + NADPH + H(+) = sulfinamide-CoA + NADP(+). It catalyses the reaction S-nitrosoglutathione + NADPH + H(+) = S-(hydroxysulfenamide)glutathione + NADP(+). In terms of biological role, catalyzes the NADPH-dependent reduction of a wide variety of carbonyl-containing compounds to their corresponding alcohols. Displays enzymatic activity towards endogenous metabolites such as aromatic and aliphatic aldehydes, ketones, monosaccharides and bile acids. Plays an important role in ascorbic acid biosynthesis by catalyzing the reduction of D-glucuronic acid and D-glucurono-gamma-lactone. Functions as a detoxifiying enzyme by reducing a range of toxic aldehydes. Reduces methylglyoxal and 3-deoxyglucosone, which are present at elevated levels under hyperglycemic conditions and are cytotoxic. Involved also in the detoxification of lipid-derived aldehydes like acrolein. Plays a role in the activation of procarcinogens, such as polycyclic aromatic hydrocarbon trans-dihydrodiols, and in the metabolism of various xenobiotics and drugs. Also acts as an inhibitor of protein S-nitrosylation by mediating degradation of S-nitroso-coenzyme A (S-nitroso-CoA), a cofactor required to S-nitrosylate proteins. S-nitroso-CoA reductase activity is involved in reprogramming intermediary metabolism in renal proximal tubules, notably by inhibiting protein S-nitrosylation of isoform 2 of PKM (PKM2). Also acts as a S-nitroso-glutathione reductase by catalyzing the NADPH-dependent reduction of S-nitrosoglutathione. Displays no reductase activity towards retinoids. The polypeptide is Aldo-keto reductase family 1 member A1 (Akr1a1) (Rattus norvegicus (Rat)).